We begin with the raw amino-acid sequence, 218 residues long: Large ribosomal subunit protein uL3 (218 aa).

The disordered stretch occupies residues His126–Gly163.

Belongs to the universal ribosomal protein uL3 family. As to quaternary structure, part of the 50S ribosomal subunit. Forms a cluster with proteins L14 and L19.

Its function is as follows. One of the primary rRNA binding proteins, it binds directly near the 3'-end of the 23S rRNA, where it nucleates assembly of the 50S subunit. The protein is Large ribosomal subunit protein uL3 of Synechococcus sp. (strain CC9311).